A 60-amino-acid polypeptide reads, in one-letter code: Prokaryotic ubiquitin-like protein UBact (60 aa).

A disordered region spans residues 1 to 60 (MPERKTQPTTDQPWTKPNDGGDESGPRSPEVERPNTRDLLERMKRVDPRQARRYRQRSGE). Positions 29–50 (PEVERPNTRDLLERMKRVDPRQ) are enriched in basic and acidic residues. Residues 51–60 (ARRYRQRSGE) show a composition bias toward basic residues. Glu60 is covalently cross-linked (Isoglutamyl lysine isopeptide (Glu-Lys) (interchain with K-? in acceptor proteins)).

This sequence belongs to the ubiquitin-like protein UBact family.

May function as a protein modifier covalently attached to lysine residues of substrate proteins. This may serve to target the modified proteins for degradation by proteasomes. This Fraserbacteria sp. (strain RBG_16_55_9) protein is Prokaryotic ubiquitin-like protein UBact.